We begin with the raw amino-acid sequence, 341 residues long: Cell wall mannoprotein PIR1 (341 aa).

Residues Met1–Ala18 form the signal peptide. A propeptide spanning residues Ala19 to Arg63 is cleaved from the precursor. PIR1/2/3 repeat units lie at residues Ala64–Thr82, Ala83–Lys101, Ala102–Thr125, Ala126–Lys144, Ala145–Thr163, Ala164–Thr182, Ala183–Thr201, and Val202–Ser220.

This sequence belongs to the PIR protein family. Post-translationally, covalently linked to beta-1,3-glucan of the inner cell wall layer via an alkali-sensitive ester linkage between the gamma-carboxyl group of glutamic acids, arising from specific glutamines within the PIR1/2/3 repeats, and hydroxyl groups of glucoses of beta-1,3-glucan chains. O-glycosylated. Extensively O-mannosylated.

Its subcellular location is the secreted. The protein resides in the cell wall. Functionally, component of the outer cell wall layer. Required for stability of the cell wall and for optimal growth. Required for resistance against several antifungal and cell wall-perturbing agents and for tolerance to heat shock. The polypeptide is Cell wall mannoprotein PIR1 (PIR1) (Saccharomyces cerevisiae (strain ATCC 204508 / S288c) (Baker's yeast)).